The chain runs to 101 residues: Small ribosomal subunit protein uS14 (101 aa).

This sequence belongs to the universal ribosomal protein uS14 family. Part of the 30S ribosomal subunit. Contacts proteins S3 and S10.

Functionally, binds 16S rRNA, required for the assembly of 30S particles and may also be responsible for determining the conformation of the 16S rRNA at the A site. The sequence is that of Small ribosomal subunit protein uS14 from Cereibacter sphaeroides (strain ATCC 17029 / ATH 2.4.9) (Rhodobacter sphaeroides).